Consider the following 697-residue polypeptide: Elongation factor G 2 (697 aa).

The tr-type G domain maps to 5-280; sequence SLYRNIGIFA…AVVDYLPSPT (276 aa). GTP-binding positions include 14–21, 78–82, and 132–135; these read AHVDAGKT, DTPGH, and NKLD.

The protein belongs to the TRAFAC class translation factor GTPase superfamily. Classic translation factor GTPase family. EF-G/EF-2 subfamily.

The protein localises to the cytoplasm. In terms of biological role, catalyzes the GTP-dependent ribosomal translocation step during translation elongation. During this step, the ribosome changes from the pre-translocational (PRE) to the post-translocational (POST) state as the newly formed A-site-bound peptidyl-tRNA and P-site-bound deacylated tRNA move to the P and E sites, respectively. Catalyzes the coordinated movement of the two tRNA molecules, the mRNA and conformational changes in the ribosome. The protein is Elongation factor G 2 of Saccharophagus degradans (strain 2-40 / ATCC 43961 / DSM 17024).